The primary structure comprises 962 residues: Cohesin subunit psc3 (962 aa).

The segment at 1–72 is disordered; the sequence is MSESVTTGSD…GVNVKRSRRN (72 aa). Residues 21 to 30 show a composition bias toward polar residues; it reads VMLSQSFDPM. The span at 51–71 shows a compositional bias: basic residues; sequence SSKKRHPRPNSKGVNVKRSRR. Residues 236 to 275 are a coiled coil; sequence LCEKSKELLNEHAIATKQLEKEEKRSRVNRNRINELNNSL. One can recognise an SCD domain in the interval 297–382; that stretch reads FVHRYRDVEP…SRFKERILEM (86 aa).

It belongs to the SCC3 family. Cohesin complexes are composed of the psm1/smc1 and psm3/smc3 heterodimer attached via their hinge domain, rad21/scc1 which link them, and psc3/scc3, which interacts with rad21. Interacts with swi6. The interaction with swi6 may contribute to recruit cohesin complex to heterochromatin.

The protein localises to the nucleus. It localises to the chromosome. Its subcellular location is the centromere. Its function is as follows. Component of cohesin complex, a complex required for the cohesion of sister chromatids after DNA replication. The cohesin complex apparently forms a large proteinaceous ring within which sister chromatids can be trapped. At anaphase, the rad21 subunit of the cohesin complex is cleaved and dissociates from chromatin, allowing sister chromatids to segregate. The cohesin complex may also play a role in spindle pole assembly during mitosis. The protein is Cohesin subunit psc3 (psc3) of Schizosaccharomyces pombe (strain 972 / ATCC 24843) (Fission yeast).